The following is a 706-amino-acid chain: Triadin (706 aa).

Residues 1–28 form a disordered region; it reads MTEITAEGNASTTTTVIDSKNGSVPKSP. The Cytoplasmic portion of the chain corresponds to 1-47; the sequence is MTEITAEGNASTTTTVIDSKNGSVPKSPGKVLKRTVTEDLVTTFSSP. The span at 8–24 shows a compositional bias: polar residues; that stretch reads GNASTTTTVIDSKNGSV. Residues 48-68 form a helical membrane-spanning segment; the sequence is AAWLLVIALIITWSAVAVVMF. Residues 69-706 lie on the Lumenal side of the membrane; it reads DLVDYKNFSA…GKPNSPGPKQ (638 aa). A glycan (N-linked (GlcNAc...) asparagine) is linked at Asn-75. Over residues 117–127 the composition is skewed to acidic residues; sequence DGDEEDDEGDE. Disordered regions lie at residues 117-265, 281-663, and 684-706; these read DGDE…EQKD, DLKP…KKQK, and FPVT…GPKQ. 7 stretches are compositionally biased toward basic and acidic residues: residues 128-254, 309-358, 372-432, 443-518, 525-552, 570-588, and 599-621; these read DTAK…ESKE, PEEK…KSPD, TKKD…KEEV, AKKE…EVKP, IKKE…EKVL, KKAE…DKPK, and ESGK…RESH. The N-linked (GlcNAc...) asparagine glycan is linked to Asn-625. The span at 628–651 shows a compositional bias: basic and acidic residues; the sequence is KAEKPARGSKEGFEDVPASKKAKE.

Interacts with CASQ2. Homooligomer of variable subunit number; disulfide-linked. Interacts with CASQ1 and RYR1 in skeletal muscle. Post-translationally, phosphorylated by CaMK2. In terms of processing, N-glycosylated. In terms of tissue distribution, detected in skeletal muscle and in heart (at protein level). Detected in skeletal muscle and in heart.

The protein localises to the sarcoplasmic reticulum membrane. Functionally, contributes to the regulation of lumenal Ca2+ release via the sarcoplasmic reticulum calcium release channels RYR1 and RYR2, a key step in triggering skeletal and heart muscle contraction. Required for normal organization of the triad junction, where T-tubules and the sarcoplasmic reticulum terminal cisternae are in close contact. Required for normal skeletal muscle strength. Plays a role in excitation-contraction coupling in the heart and in regulating the rate of heart beats. In Oryctolagus cuniculus (Rabbit), this protein is Triadin (TRDN).